The sequence spans 391 residues: Phosphoglycerate kinase (391 aa).

Substrate contacts are provided by residues 21–23, Arg-36, 59–62, Arg-113, and Arg-146; these read DLN and HLGR. ATP-binding positions include Lys-197, Glu-319, and 345 to 348; that span reads GGDT.

It belongs to the phosphoglycerate kinase family. As to quaternary structure, monomer.

It localises to the cytoplasm. The enzyme catalyses (2R)-3-phosphoglycerate + ATP = (2R)-3-phospho-glyceroyl phosphate + ADP. It functions in the pathway carbohydrate degradation; glycolysis; pyruvate from D-glyceraldehyde 3-phosphate: step 2/5. The polypeptide is Phosphoglycerate kinase (Xylella fastidiosa (strain 9a5c)).